We begin with the raw amino-acid sequence, 282 residues long: Pantothenate synthetase (282 aa).

30-37 lines the ATP pocket; sequence MGYLHEGH. Residue histidine 37 is the Proton donor of the active site. Residue glutamine 61 participates in (R)-pantoate binding. Glutamine 61 is a beta-alanine binding site. An ATP-binding site is contributed by 147-150; the sequence is GMKD. (R)-pantoate is bound at residue glutamine 153. ATP-binding positions include valine 176 and 184–187; that span reads KSSR.

Belongs to the pantothenate synthetase family. As to quaternary structure, homodimer.

Its subcellular location is the cytoplasm. The catalysed reaction is (R)-pantoate + beta-alanine + ATP = (R)-pantothenate + AMP + diphosphate + H(+). It functions in the pathway cofactor biosynthesis; (R)-pantothenate biosynthesis; (R)-pantothenate from (R)-pantoate and beta-alanine: step 1/1. Functionally, catalyzes the condensation of pantoate with beta-alanine in an ATP-dependent reaction via a pantoyl-adenylate intermediate. The polypeptide is Pantothenate synthetase (Bacillus thuringiensis subsp. konkukian (strain 97-27)).